The primary structure comprises 615 residues: Sodium-dependent neutral amino acid transporter B(0)AT3 (615 aa).

At 1-26 (MAQASGMDPLVDIEDERPKWDNKLQY) the chain is on the cytoplasmic side. A helical transmembrane segment spans residues 27–47 (LLSCIGFAVGLGNIWRFPYLC). At 48-52 (QTHGG) the chain is on the extracellular side. Residues 53 to 73 (GAFLIPYFIALVFEGIPLFYI) form a helical membrane-spanning segment. The Cytoplasmic portion of the chain corresponds to 74-105 (ELAIGQRLRRGSIGVWKTISPYLGGVGLGCFS). A helical membrane pass occupies residues 106–126 (VSFLVSLYYNTVLLWVLWFFL). The Extracellular portion of the chain corresponds to 127–177 (NSFQHPLPWSTCPLDLNRTGFVQECQSSGTVSYFWYRQTLNITSDISNTGT). Asparagine 143 and asparagine 167 each carry an N-linked (GlcNAc...) asparagine glycan. The helical transmembrane segment at 178–198 (IQWKLFLCLVACWSTVYLCVI) threads the bilayer. Residues 199–206 (RGIESTGK) lie on the Cytoplasmic side of the membrane. A helical transmembrane segment spans residues 207-227 (VIYFTALFPYLVLTIFLIRGL). The Extracellular segment spans residues 228-255 (TLPGATEGLIYLFTPNMKTLQNPRVWLD). Residues 256 to 276 (AATQIFFSLSLAFGGHIAFAS) form a helical membrane-spanning segment. The Cytoplasmic segment spans residues 277–288 (YNPPRNNCEKDA). A helical transmembrane segment spans residues 289–309 (VIIALVNSMTSLYASIAIFSV). Topologically, residues 310–397 (MGFKASNDYG…FTEAVLHMPG (88 aa)) are extracellular. Asparagine 353 carries N-linked (GlcNAc...) asparagine glycosylation. A helical transmembrane segment spans residues 398 to 418 (ASVWSVLFFGMLFTLGLSSMF). Residues 419–441 (GNMEGVITPLLDMGILPKGIPKE) lie on the Cytoplasmic side of the membrane. A helical membrane pass occupies residues 442–462 (VMTGVICFACFLSAICFTLQS). The Extracellular segment spans residues 463–472 (GGYWLEIFDS). The chain crosses the membrane as a helical span at residues 473 to 493 (FAASLNLIIFAFMEVVGVIHI). At 494–520 (YGMKRFCDDIEWMTGRRPGLYWQVTWR) the chain is on the cytoplasmic side. Residues 521 to 541 (VVSPMLLFGIFLSYIVLLIQT) form a helical membrane-spanning segment. At 542–570 (PPSYKAWNPQYEHFPSREEKFYPGWVQVT) the chain is on the extracellular side. A helical membrane pass occupies residues 571–591 (CVLLSFLPSLWVPGVALAQLL). Topologically, residues 592-615 (SQYKQRWKATHLESGLKLQESRGC) are cytoplasmic.

Belongs to the sodium:neurotransmitter symporter (SNF) (TC 2.A.22) family. SLC6A18 subfamily. Interacts with CLTRN; this interaction regulates the trafficking of SLC6A18 to the cell membrane and its activity. As to expression, expressed predominantly in kidney.

Its subcellular location is the apical cell membrane. It localises to the cell membrane. It carries out the reaction L-alanine(out) + chloride(out) + 2 Na(+)(out) = L-alanine(in) + chloride(in) + 2 Na(+)(in). The enzyme catalyses glycine(out) + chloride(out) + 2 Na(+)(out) = glycine(in) + chloride(in) + 2 Na(+)(in). The catalysed reaction is L-methionine(out) + chloride(out) + 2 Na(+)(out) = L-methionine(in) + chloride(in) + 2 Na(+)(in). It catalyses the reaction L-valine(out) + chloride(out) + 2 Na(+)(out) = L-valine(in) + chloride(in) + 2 Na(+)(in). It carries out the reaction L-isoleucine(out) + chloride(out) + 2 Na(+)(out) = L-isoleucine(in) + chloride(in) + 2 Na(+)(in). The enzyme catalyses L-serine(out) + chloride(out) + 2 Na(+)(out) = L-serine(in) + chloride(in) + 2 Na(+)(in). The catalysed reaction is L-leucine(out) + chloride(out) + 2 Na(+)(out) = L-leucine(in) + chloride(in) + 2 Na(+)(in). Symporter that transports one amino acid molecule together with two sodium and one chloride ions in kidneys and plays a role in the neutral amino acids reabsorption. Preferentially transports neutral amino acids such as L-glycine and L-alanine but also other neutral amino acids. Required CLTRN for cell surface expression and for its amino acid transporter activity. The transport mechanism is pH-independent. This chain is Sodium-dependent neutral amino acid transporter B(0)AT3, found in Mus musculus (Mouse).